We begin with the raw amino-acid sequence, 544 residues long: Glycoprotein gp100 (544 aa).

The first 19 residues, 1 to 19 (MKNFILLVFLFLLVSNSLG), serve as a signal peptide directing secretion. Over 20–489 (KSNKKDDQSP…SGGGGNKKLY (470 aa)) the chain is Extracellular. An N-linked (GlcNAc...) asparagine glycan is attached at N80. A compositionally biased stretch (polar residues) spans 84–99 (EPQNNPIPTVSINPDQ). Positions 84–215 (EPQNNPIPTV…TPTRPSSSVS (132 aa)) are disordered. Composition is skewed to low complexity over residues 126–142 (SKPTSTPTSTPSQTIPP), 150–165 (PQTTSPTSKPTSTPTP), and 189–199 (PKPTKSSKPTK). 8 N-linked (GlcNAc...) asparagine glycosylation sites follow: N224, N308, N332, N366, N380, N410, N422, and N478. The tract at residues 444–480 (KPSTTDDDNNKNNDDGDSEIDSVGKSAVDSSKSNNNS) is disordered. A helical membrane pass occupies residues 490–510 (LLIILPTVLFIIVAALVAIFI). The Cytoplasmic segment spans residues 511 to 544 (KTRVSQNSGSKVNKNNNKKDSINVPFQMLDEITT).

Post-translationally, N- and O-glycosylated.

The protein localises to the membrane. The protein is Glycoprotein gp100 (gppA) of Dictyostelium discoideum (Social amoeba).